Here is a 69-residue protein sequence, read N- to C-terminus: U2-agatoxin-Ao1i (69 aa).

The first 20 residues, 1–20 (MKAIISLLLISAMVFSMIEA), serve as a signal peptide directing secretion. Positions 21–34 (VPVXXGLQLFESER) are excised as a propeptide. 3 disulfide bridges follow: Cys36/Cys52, Cys43/Cys57, and Cys51/Cys67. Leu68 is modified (leucine amide).

This sequence belongs to the neurotoxin 01 (U2-agtx) family. In terms of tissue distribution, expressed by the venom gland.

Its subcellular location is the secreted. Functionally, insect active toxin causing rapid but reversible paralysis in crickets. No activity shown in mammals. Does not show effect on mammalian voltage-gated calcium channels. The sequence is that of U2-agatoxin-Ao1i from Agelena orientalis (Funnel-web spider).